A 254-amino-acid polypeptide reads, in one-letter code: 3-deoxy-manno-octulosonate cytidylyltransferase (254 aa).

This sequence belongs to the KdsB family.

Its subcellular location is the cytoplasm. The catalysed reaction is 3-deoxy-alpha-D-manno-oct-2-ulosonate + CTP = CMP-3-deoxy-beta-D-manno-octulosonate + diphosphate. The protein operates within nucleotide-sugar biosynthesis; CMP-3-deoxy-D-manno-octulosonate biosynthesis; CMP-3-deoxy-D-manno-octulosonate from 3-deoxy-D-manno-octulosonate and CTP: step 1/1. Its pathway is bacterial outer membrane biogenesis; lipopolysaccharide biosynthesis. Its function is as follows. Activates KDO (a required 8-carbon sugar) for incorporation into bacterial lipopolysaccharide in Gram-negative bacteria. The protein is 3-deoxy-manno-octulosonate cytidylyltransferase of Haemophilus influenzae (strain 86-028NP).